Consider the following 605-residue polypeptide: DNA primase (605 aa).

Residues 38–62 (CPFHDEKTPSFTVSEDKQICHCFGC) form a CHC2-type zinc finger. In terms of domain architecture, Toprim spans 260 to 341 (DEIVLLEGFM…NVFVIQLPSG (82 aa)). Mg(2+) contacts are provided by Glu-266, Asp-310, and Asp-312.

The protein belongs to the DnaG primase family. As to quaternary structure, monomer. Interacts with DnaB. It depends on Zn(2+) as a cofactor. Requires Mg(2+) as cofactor.

It catalyses the reaction ssDNA + n NTP = ssDNA/pppN(pN)n-1 hybrid + (n-1) diphosphate.. RNA polymerase that catalyzes the synthesis of short RNA molecules used as primers for DNA polymerase during DNA replication. This chain is DNA primase, found in Staphylococcus aureus (strain Mu50 / ATCC 700699).